Here is a 97-residue protein sequence, read N- to C-terminus: YcgL domain-containing protein PputW619_3899 (97 aa).

The region spanning 3 to 87 (RICSIYKSPR…AEDEYIEHLP (85 aa)) is the YcgL domain.

The sequence is that of YcgL domain-containing protein PputW619_3899 from Pseudomonas putida (strain W619).